The sequence spans 324 residues: Corticotropin-releasing factor-binding protein (324 aa).

The N-terminal stretch at methionine 1–serine 23 is a signal peptide. Cystine bridges form between cysteine 62–cysteine 83, cysteine 106–cysteine 143, cysteine 185–cysteine 207, cysteine 239–cysteine 266, and cysteine 279–cysteine 320. Residue asparagine 206 is glycosylated (N-linked (GlcNAc...) asparagine).

It belongs to the CRF-binding protein family.

The protein localises to the secreted. Its function is as follows. Binds CRF and inactivates it. May prevent inappropriate pituitary-adrenal stimulation in pregnancy. The protein is Corticotropin-releasing factor-binding protein (CRHBP) of Ovis aries (Sheep).